A 103-amino-acid polypeptide reads, in one-letter code: Small ribosomal subunit protein uS14c (103 aa).

Belongs to the universal ribosomal protein uS14 family. In terms of assembly, part of the 30S ribosomal subunit.

It is found in the plastid. It localises to the chloroplast. Functionally, binds 16S rRNA, required for the assembly of 30S particles. This is Small ribosomal subunit protein uS14c from Oryza nivara (Indian wild rice).